A 489-amino-acid chain; its full sequence is Glycogen synthase (489 aa).

Lys15 is an ADP-alpha-D-glucose binding site.

The protein belongs to the glycosyltransferase 1 family. Bacterial/plant glycogen synthase subfamily.

The catalysed reaction is [(1-&gt;4)-alpha-D-glucosyl](n) + ADP-alpha-D-glucose = [(1-&gt;4)-alpha-D-glucosyl](n+1) + ADP + H(+). Its pathway is glycan biosynthesis; glycogen biosynthesis. Synthesizes alpha-1,4-glucan chains using ADP-glucose. This chain is Glycogen synthase, found in Francisella tularensis subsp. tularensis (strain SCHU S4 / Schu 4).